The sequence spans 458 residues: tRNA(Ile)-lysidine synthase (458 aa).

36-41 (SGGADS) contacts ATP.

This sequence belongs to the tRNA(Ile)-lysidine synthase family.

It localises to the cytoplasm. The enzyme catalyses cytidine(34) in tRNA(Ile2) + L-lysine + ATP = lysidine(34) in tRNA(Ile2) + AMP + diphosphate + H(+). Ligates lysine onto the cytidine present at position 34 of the AUA codon-specific tRNA(Ile) that contains the anticodon CAU, in an ATP-dependent manner. Cytidine is converted to lysidine, thus changing the amino acid specificity of the tRNA from methionine to isoleucine. This is tRNA(Ile)-lysidine synthase from Protochlamydia amoebophila (strain UWE25).